The chain runs to 152 residues: Putative NrdI-like protein (152 aa).

The protein belongs to the NrdI family.

This chain is Putative NrdI-like protein, found in Streptococcus pyogenes serotype M18 (strain MGAS8232).